The chain runs to 163 residues: Nucleotide-binding protein MUL_0671 (163 aa).

The protein belongs to the YajQ family.

Functionally, nucleotide-binding protein. The chain is Nucleotide-binding protein MUL_0671 from Mycobacterium ulcerans (strain Agy99).